Reading from the N-terminus, the 294-residue chain is Pyridoxal 5'-phosphate synthase subunit PdxS (294 aa).

Position 24 (aspartate 24) interacts with D-ribose 5-phosphate. Catalysis depends on lysine 81, which acts as the Schiff-base intermediate with D-ribose 5-phosphate. Glycine 153 provides a ligand contact to D-ribose 5-phosphate. Residue arginine 165 participates in D-glyceraldehyde 3-phosphate binding. D-ribose 5-phosphate is bound by residues glycine 214 and 235-236; that span reads GS.

It belongs to the PdxS/SNZ family. In terms of assembly, in the presence of PdxT, forms a dodecamer of heterodimers.

The catalysed reaction is aldehydo-D-ribose 5-phosphate + D-glyceraldehyde 3-phosphate + L-glutamine = pyridoxal 5'-phosphate + L-glutamate + phosphate + 3 H2O + H(+). It participates in cofactor biosynthesis; pyridoxal 5'-phosphate biosynthesis. Catalyzes the formation of pyridoxal 5'-phosphate from ribose 5-phosphate (RBP), glyceraldehyde 3-phosphate (G3P) and ammonia. The ammonia is provided by the PdxT subunit. Can also use ribulose 5-phosphate and dihydroxyacetone phosphate as substrates, resulting from enzyme-catalyzed isomerization of RBP and G3P, respectively. The polypeptide is Pyridoxal 5'-phosphate synthase subunit PdxS (Anoxybacillus flavithermus (strain DSM 21510 / WK1)).